A 364-amino-acid chain; its full sequence is Triacylglycerol lipase (364 aa).

The first 44 residues, 1–44 (MARTMRSRVVAGAVACAMSIAPFAGTTAVMTLATTHAAMAATAP), serve as a signal peptide directing secretion. The AB hydrolase-1 domain maps to 54-333 (PIILVHGLSG…TSYKWNHLDE (280 aa)). Leu61 serves as a coordination point for substrate. The active-site Nucleophile is Ser131. Gln132 contributes to the substrate binding site. Cys234 and Cys314 are oxidised to a cystine. Asp286 serves as a coordination point for Ca(2+). Catalysis depends on charge relay system residues Asp308 and His330. Ca(2+)-binding residues include Asp332, Gln336, and Val340.

Belongs to the AB hydrolase superfamily. Pseudomonas lipase family. In terms of assembly, monomer. Ca(2+) is required as a cofactor.

It localises to the secreted. It catalyses the reaction a triacylglycerol + H2O = a diacylglycerol + a fatty acid + H(+). In terms of biological role, catalyzes the hydrolysis of triacylglycerol. The protein is Triacylglycerol lipase of Pseudomonas sp. (strain KWI-56).